The following is a 102-amino-acid chain: Citrate lyase acyl carrier protein (102 aa).

Position 14 is an O-(phosphoribosyl dephospho-coenzyme A)serine (serine 14).

This sequence belongs to the CitD family. Oligomer with a subunit composition of (alpha,beta,gamma)6.

The protein resides in the cytoplasm. Its function is as follows. Covalent carrier of the coenzyme of citrate lyase. The chain is Citrate lyase acyl carrier protein from Serratia proteamaculans (strain 568).